A 107-amino-acid chain; its full sequence is Glutaredoxin-1 (107 aa).

A2 is subject to N-acetylalanine. The region spanning 3-106 (QEFVNCKIQS…TRLKQIGALQ (104 aa)) is the Glutaredoxin domain. The residue at position 9 (K9) is an N6-succinyllysine. 2 cysteine pairs are disulfide-bonded: C23-C26 and C79-C83.

Belongs to the glutaredoxin family.

Its subcellular location is the cytoplasm. Has a glutathione-disulfide oxidoreductase activity in the presence of NADPH and glutathione reductase. Reduces low molecular weight disulfides and proteins. The chain is Glutaredoxin-1 (Glrx) from Mus musculus (Mouse).